The sequence spans 183 residues: Microfibrillar-associated protein 2 (183 aa).

The or 19 signal peptide spans 1-17 (MRAAYLFLLFLPAGLLA). A Pyrrolidone carboxylic acid modification is found at Q18. A sulfotyrosine mark is found at Y47, Y48, and Y50. The disordered stretch occupies residues 58–94 (SEEQFQFQSQQQVQQEVIPAPTPEPGNAELEPTEPGP). Residues 60 to 74 (EQFQFQSQQQVQQEV) show a composition bias toward low complexity. The ShKT domain maps to 153–183 (CRDKFSKCGVMASSGLCQSVAASCARSCGSC). Cystine bridges form between C153-C183, C160-C176, and C169-C180.

It belongs to the MFAP family. As to quaternary structure, forms a ternary complex with BGN and ELN. Interacts with FBN1 (via N-terminal domain) and FBN2. Forms intermolecular disulfide bonds either with other MAGP-1 molecules or with other components of the microfibrils. May form transglutaminase cross-links. In terms of processing, O-glycosylated.

Its subcellular location is the secreted. It localises to the extracellular space. The protein localises to the extracellular matrix. Its function is as follows. Component of the elastin-associated microfibrils. The chain is Microfibrillar-associated protein 2 (MFAP2) from Homo sapiens (Human).